A 390-amino-acid polypeptide reads, in one-letter code: Formate-dependent phosphoribosylglycinamide formyltransferase (390 aa).

N(1)-(5-phospho-beta-D-ribosyl)glycinamide-binding positions include 18–19 (EL) and glutamate 78. ATP is bound by residues arginine 110, lysine 151, 156-161 (SSGKGQ), 191-194 (EEFL), and glutamate 199. The 191-residue stretch at 115–305 (DLASKELNIK…EFELHLRAFL (191 aa)) folds into the ATP-grasp domain. Residues glutamate 264 and glutamate 276 each contribute to the Mg(2+) site. N(1)-(5-phospho-beta-D-ribosyl)glycinamide is bound by residues aspartate 283, lysine 353, and 360 to 361 (RR).

The protein belongs to the PurK/PurT family. Homodimer.

The enzyme catalyses N(1)-(5-phospho-beta-D-ribosyl)glycinamide + formate + ATP = N(2)-formyl-N(1)-(5-phospho-beta-D-ribosyl)glycinamide + ADP + phosphate + H(+). It functions in the pathway purine metabolism; IMP biosynthesis via de novo pathway; N(2)-formyl-N(1)-(5-phospho-D-ribosyl)glycinamide from N(1)-(5-phospho-D-ribosyl)glycinamide (formate route): step 1/1. In terms of biological role, involved in the de novo purine biosynthesis. Catalyzes the transfer of formate to 5-phospho-ribosyl-glycinamide (GAR), producing 5-phospho-ribosyl-N-formylglycinamide (FGAR). Formate is provided by PurU via hydrolysis of 10-formyl-tetrahydrofolate. The chain is Formate-dependent phosphoribosylglycinamide formyltransferase from Prochlorococcus marinus subsp. pastoris (strain CCMP1986 / NIES-2087 / MED4).